The chain runs to 2014 residues: AP-1 accessory protein LAA1 (2014 aa).

In terms of assembly, interacts with the clathrin-associated adapter complex AP-1. Interacts directly with LAA2.

The protein resides in the golgi apparatus. The protein localises to the cytoplasmic vesicle. It is found in the clathrin-coated vesicle. Functionally, involved in localization of clathrin adapter protein complex-1 (AP-1) and subsequent AP-1-mediated clathrin-coated vesicle cargo loading. In complex with LAA2, cooperates with the small GTPase ARF1 and the phosphatidyl-inositol-4-phosphate (PI4P) synthesis to confer temporal specificity to AP-1 recruitment. The sequence is that of AP-1 accessory protein LAA1 from Saccharomyces cerevisiae (strain ATCC 204508 / S288c) (Baker's yeast).